The sequence spans 461 residues: MNKLKKIQMKETDYYFGNDIAQLNLPGLKKYTNGRRLVEDQGISNKHYMFVRHDGDSWIKSSDKSCKFDKIIIKADYVEKHIFPKKMKPNKDDDEEEDEDDEDDEDDEEEDNEEEDNEEENEITIAPGIIKLSKKEKMKDNSGNIIEIEVRGTRDHDNCYFRVSDVSVGFGMKKLHDTITKKGGYEENNHYRYFYIDKNPTNSGKSKKVKSKKPLPKKLFLTYLGLLKVLFVSRNKTVGNFLNWATETLFTAHLGTQDQKNELSSKLMGISANIVKEVFSTTSSTLPTIYLFSIGKVKDLRATLKIDKEYNDNDIVCKVGETIDLTRRINEHNATYGKLPGANLCLKWYNYIDPQHTSKAETELLMLLDKLGHKLDHPKYDELIIFPKDKKAGKFIIDQFKNVSNKYIGHVKVLVDKIKELENEIKELKYQNEINELKYKNIILEKDLEISNLNKKLKKKK.

The segment at 86–127 (KMKPNKDDDEEEDEDDEDDEDDEEEDNEEEDNEEENEITIAP) is disordered. Positions 92–122 (DDDEEEDEDDEDDEDDEEEDNEEEDNEEENE) are enriched in acidic residues. Coiled coils occupy residues 95–123 (EEED…ENEI) and 405–459 (NKYI…KLKK).

Belongs to the mimivirus L5 family.

This is an uncharacterized protein from Acanthamoeba polyphaga mimivirus (APMV).